The sequence spans 193 residues: MQELEERIQSEGTVKAGNVLKVDAFLNHQCDVRLFDRMGSAWAAHFAGKHITKILTIEASGIGIACVAAQHFGNVPVVFAKKAQSINLDGDQYTTTVYSFTKQKEFPVIVAKKYLNAGDHVLLIDDFLANGKALRGLIDLCEAAGATVEGIGIAVEKGFQGGGDALRAEGYDVDSLAIVESMNPETGEITFRH.

Xanthine-binding residues include leucine 20 and asparagine 27. A 5-phospho-alpha-D-ribose 1-diphosphate-binding site is contributed by 129 to 133 (ANGKA). A xanthine-binding site is contributed by lysine 157.

The protein belongs to the purine/pyrimidine phosphoribosyltransferase family. Xpt subfamily. Homodimer.

The protein resides in the cytoplasm. It carries out the reaction XMP + diphosphate = xanthine + 5-phospho-alpha-D-ribose 1-diphosphate. It functions in the pathway purine metabolism; XMP biosynthesis via salvage pathway; XMP from xanthine: step 1/1. In terms of biological role, converts the preformed base xanthine, a product of nucleic acid breakdown, to xanthosine 5'-monophosphate (XMP), so it can be reused for RNA or DNA synthesis. The sequence is that of Xanthine phosphoribosyltransferase from Bifidobacterium longum (strain NCC 2705).